The chain runs to 203 residues: NAD(P)H dehydrogenase (quinone) (203 aa).

In terms of domain architecture, Flavodoxin-like spans 3–194 (VLIVYYSLYG…DAARFQGRHI (192 aa)). FMN-binding positions include 9–14 (SLYGHV) and 82–84 (TRF). Tyr-11 provides a ligand contact to NAD(+). Trp-102 contributes to the substrate binding site. Residues 117–123 (STATQHG) and His-138 each bind FMN.

It belongs to the WrbA family. The cofactor is FMN.

It catalyses the reaction a quinone + NADH + H(+) = a quinol + NAD(+). It carries out the reaction a quinone + NADPH + H(+) = a quinol + NADP(+). This Solidesulfovibrio magneticus (strain ATCC 700980 / DSM 13731 / RS-1) (Desulfovibrio magneticus) protein is NAD(P)H dehydrogenase (quinone).